Reading from the N-terminus, the 227-residue chain is 4'-phosphopantetheinyl transferase PptT (227 aa).

Residues Arg48, Arg56, 75–78 (KGDK), 92–93 (TH), and Asp114 each bind CoA. Residues Asp114, Ala115, and Glu116 each contribute to the Mg(2+) site. CoA contacts are provided by Glu157, Lys161, and Leu171.

The protein belongs to the P-Pant transferase superfamily. Requires Mg(2+) as cofactor.

The enzyme catalyses apo-[ACP] + CoA = holo-[ACP] + adenosine 3',5'-bisphosphate + H(+). Inhibited by the amidino-urea compound 1-[(2,6-diethylphenyl)-3-N-ethylcarbamimodoyl]urea (compound 8918). It acts by binding to the phosphopantetheine pocket in the active site. Inhibition by compound 8918 kills M.tuberculosis. Functionally, transfers the 4'-phosphopantetheine moiety from coenzyme A to a Ser of acyl-carrier-protein. Involved in post-translational modification of various type-I polyketide synthases required for the formation of both mycolic acids and lipid virulence factors. Acts on Pks13, Mas, PpsA, PpsB, PpsC and PpsD. Also acts on AcpM, the meromycolate extension acyl carrier protein. In addition, is involved in the activation of the acyl carrier protein MbtL and the nonribosomal peptides synthases MbtB and MbtE, which are involved in the biosynthesis of the siderophore mycobactin. Required for the replication and survival of Mycobacterium during the acute and chronic phases of infection in mice. This chain is 4'-phosphopantetheinyl transferase PptT, found in Mycobacterium tuberculosis (strain ATCC 25618 / H37Rv).